The chain runs to 439 residues: Trigger factor (439 aa).

The 86-residue stretch at 162-247 (GDTVTIDYVG…IHEVKAKQLP (86 aa)) folds into the PPIase FKBP-type domain.

The protein belongs to the FKBP-type PPIase family. Tig subfamily.

Its subcellular location is the cytoplasm. It catalyses the reaction [protein]-peptidylproline (omega=180) = [protein]-peptidylproline (omega=0). Functionally, involved in protein export. Acts as a chaperone by maintaining the newly synthesized protein in an open conformation. Functions as a peptidyl-prolyl cis-trans isomerase. The polypeptide is Trigger factor (Lactobacillus delbrueckii subsp. bulgaricus (strain ATCC 11842 / DSM 20081 / BCRC 10696 / JCM 1002 / NBRC 13953 / NCIMB 11778 / NCTC 12712 / WDCM 00102 / Lb 14)).